Reading from the N-terminus, the 270-residue chain is uncharacterized protein (270 aa).

An N-terminal signal peptide occupies residues 1–22 (MEYIKKIALYMSVLLLIIFIGG). Residue C23 is the site of N-palmitoyl cysteine attachment. The S-diacylglycerol cysteine moiety is linked to residue C23.

This sequence belongs to the staphylococcal tandem lipoprotein family.

The protein resides in the cell membrane. This is an uncharacterized protein from Staphylococcus aureus (strain NCTC 8325 / PS 47).